Here is a 574-residue protein sequence, read N- to C-terminus: Cell division cycle 7-related protein kinase (574 aa).

Ser-27 is subject to Phosphoserine. Residues 58–574 (FKIEDKIGEG…LHPFFKDMSL (517 aa)) form the Protein kinase domain. ATP contacts are provided by residues 64 to 72 (IGEGTFSSV) and Lys-90. The active-site Proton acceptor is Asp-177. Lys-268 is covalently cross-linked (Glycyl lysine isopeptide (Lys-Gly) (interchain with G-Cter in SUMO2)). Phosphothreonine is present on Thr-503.

It belongs to the protein kinase superfamily. Ser/Thr protein kinase family. CDC7 subfamily. Forms a complex with either DBF4/DBF4A or DBF4B, leading to the activation of the kinase activity. Interacts with CLASPIN (via the acidic patch); the interaction is required for phosphorylation of MCM proteins and CLASPIN. Mg(2+) is required as a cofactor.

The protein resides in the nucleus. The catalysed reaction is L-seryl-[protein] + ATP = O-phospho-L-seryl-[protein] + ADP + H(+). It catalyses the reaction L-threonyl-[protein] + ATP = O-phospho-L-threonyl-[protein] + ADP + H(+). Its function is as follows. Kinase involved in initiation of DNA replication. Phosphorylates critical substrates that regulate the G1/S phase transition and initiation of DNA replication, such as MCM proteins and CLASPIN. This Homo sapiens (Human) protein is Cell division cycle 7-related protein kinase.